Consider the following 254-residue polypeptide: Ubiquinone biosynthesis O-methyltransferase (254 aa).

4 residues coordinate S-adenosyl-L-methionine: arginine 47, glycine 78, aspartate 99, and methionine 141.

This sequence belongs to the methyltransferase superfamily. UbiG/COQ3 family.

The enzyme catalyses a 3-demethylubiquinol + S-adenosyl-L-methionine = a ubiquinol + S-adenosyl-L-homocysteine + H(+). It carries out the reaction a 3-(all-trans-polyprenyl)benzene-1,2-diol + S-adenosyl-L-methionine = a 2-methoxy-6-(all-trans-polyprenyl)phenol + S-adenosyl-L-homocysteine + H(+). It functions in the pathway cofactor biosynthesis; ubiquinone biosynthesis. Its function is as follows. O-methyltransferase that catalyzes the 2 O-methylation steps in the ubiquinone biosynthetic pathway. This Rhodopseudomonas palustris (strain BisB18) protein is Ubiquinone biosynthesis O-methyltransferase.